A 616-amino-acid polypeptide reads, in one-letter code: Dihydroxy-acid dehydratase (616 aa).

Asp-81 provides a ligand contact to Mg(2+). Cys-122 is a [2Fe-2S] cluster binding site. Residues Asp-123 and Lys-124 each contribute to the Mg(2+) site. Position 124 is an N6-carboxylysine (Lys-124). Cys-195 contributes to the [2Fe-2S] cluster binding site. Glu-491 contributes to the Mg(2+) binding site. Ser-517 acts as the Proton acceptor in catalysis.

Belongs to the IlvD/Edd family. As to quaternary structure, homodimer. [2Fe-2S] cluster is required as a cofactor. Requires Mg(2+) as cofactor.

The catalysed reaction is (2R)-2,3-dihydroxy-3-methylbutanoate = 3-methyl-2-oxobutanoate + H2O. It carries out the reaction (2R,3R)-2,3-dihydroxy-3-methylpentanoate = (S)-3-methyl-2-oxopentanoate + H2O. Its pathway is amino-acid biosynthesis; L-isoleucine biosynthesis; L-isoleucine from 2-oxobutanoate: step 3/4. It participates in amino-acid biosynthesis; L-valine biosynthesis; L-valine from pyruvate: step 3/4. Functions in the biosynthesis of branched-chain amino acids. Catalyzes the dehydration of (2R,3R)-2,3-dihydroxy-3-methylpentanoate (2,3-dihydroxy-3-methylvalerate) into 2-oxo-3-methylpentanoate (2-oxo-3-methylvalerate) and of (2R)-2,3-dihydroxy-3-methylbutanoate (2,3-dihydroxyisovalerate) into 2-oxo-3-methylbutanoate (2-oxoisovalerate), the penultimate precursor to L-isoleucine and L-valine, respectively. This is Dihydroxy-acid dehydratase from Edwardsiella ictaluri (strain 93-146).